The sequence spans 258 residues: Thiazole synthase (258 aa).

Lys-98 serves as the catalytic Schiff-base intermediate with DXP. 1-deoxy-D-xylulose 5-phosphate-binding positions include Gly-159, Ala-185 to Gly-186, and Asn-207 to Thr-208.

It belongs to the ThiG family. As to quaternary structure, homotetramer. Forms heterodimers with either ThiH or ThiS.

The protein resides in the cytoplasm. The enzyme catalyses [ThiS sulfur-carrier protein]-C-terminal-Gly-aminoethanethioate + 2-iminoacetate + 1-deoxy-D-xylulose 5-phosphate = [ThiS sulfur-carrier protein]-C-terminal Gly-Gly + 2-[(2R,5Z)-2-carboxy-4-methylthiazol-5(2H)-ylidene]ethyl phosphate + 2 H2O + H(+). Its pathway is cofactor biosynthesis; thiamine diphosphate biosynthesis. Its function is as follows. Catalyzes the rearrangement of 1-deoxy-D-xylulose 5-phosphate (DXP) to produce the thiazole phosphate moiety of thiamine. Sulfur is provided by the thiocarboxylate moiety of the carrier protein ThiS. In vitro, sulfur can be provided by H(2)S. This is Thiazole synthase from Bacillus cereus (strain ATCC 14579 / DSM 31 / CCUG 7414 / JCM 2152 / NBRC 15305 / NCIMB 9373 / NCTC 2599 / NRRL B-3711).